The chain runs to 418 residues: Tyrosine--tRNA ligase (418 aa).

Tyr-34 is an L-tyrosine binding site. Residues 39 to 48 carry the 'HIGH' region motif; the sequence is PTADSLHLGH. Tyr-169 and Gln-173 together coordinate L-tyrosine. Positions 229–233 match the 'KMSKS' region motif; that stretch reads KFGKS. Lys-232 provides a ligand contact to ATP. The 67-residue stretch at 352-418 folds into the S4 RNA-binding domain; it reads HNIVEILVAA…GKKKYAVLTY (67 aa).

Belongs to the class-I aminoacyl-tRNA synthetase family. TyrS type 1 subfamily. Homodimer.

It localises to the cytoplasm. The enzyme catalyses tRNA(Tyr) + L-tyrosine + ATP = L-tyrosyl-tRNA(Tyr) + AMP + diphosphate + H(+). Catalyzes the attachment of tyrosine to tRNA(Tyr) in a two-step reaction: tyrosine is first activated by ATP to form Tyr-AMP and then transferred to the acceptor end of tRNA(Tyr). The sequence is that of Tyrosine--tRNA ligase from Streptococcus pyogenes serotype M1.